The chain runs to 267 residues: MDDRFVKEINQFFAEIKIQNNVRLVDGKFGKMCVIKHEPTGKLFVKKSVAIKYVTEIEPLVHQLMKDNRYFIKLYYSLTTLKSQILILDYVAGGDLFDFLKKHKKVSEAETRSIVGQLTEALNALHSYKIIHNDLKLENVLYVRHKQIYLCDYGLCKIVNTSSCRDGTKEYMSPEKLKRQNYDVHVDWWALGILTYELLIGHHPYKHSNDNEEDFDLDVLQQRQQKKLHKYNFLSSDAQKFLEAMLMYNINYRLCTYETVIKHSFLS.

The Protein kinase domain maps to 18 to 266; sequence IQNNVRLVDG…YETVIKHSFL (249 aa). ATP-binding positions include 24-32 and K47; that span reads LVDGKFGKM. D134 serves as the catalytic Proton acceptor.

Belongs to the protein kinase superfamily. Ser/Thr protein kinase family.

The catalysed reaction is L-seryl-[protein] + ATP = O-phospho-L-seryl-[protein] + ADP + H(+). It carries out the reaction L-threonyl-[protein] + ATP = O-phospho-L-threonyl-[protein] + ADP + H(+). This chain is Serine/threonine-protein kinase 1 (PK1), found in Heliothis zea nuclear polyhedrosis virus (HzSNPV).